We begin with the raw amino-acid sequence, 476 residues long: Glutamate--tRNA ligase (476 aa).

The short motif at 9–19 is the 'HIGH' region element; sequence PSPTGKLHIGT. Over residues 109–129 the composition is skewed to basic and acidic residues; sequence REEQKSRNKPPRYDNRHRSLS. The interval 109–133 is disordered; sequence REEQKSRNKPPRYDNRHRSLSTEEE. The short motif at 248–252 is the 'KMSKS' region element; sequence KLSKR. Lys251 provides a ligand contact to ATP.

This sequence belongs to the class-I aminoacyl-tRNA synthetase family. Glutamate--tRNA ligase type 1 subfamily. As to quaternary structure, monomer.

The protein resides in the cytoplasm. It carries out the reaction tRNA(Glu) + L-glutamate + ATP = L-glutamyl-tRNA(Glu) + AMP + diphosphate. In terms of biological role, catalyzes the attachment of glutamate to tRNA(Glu) in a two-step reaction: glutamate is first activated by ATP to form Glu-AMP and then transferred to the acceptor end of tRNA(Glu). This is Glutamate--tRNA ligase from Prochlorococcus marinus (strain MIT 9211).